Reading from the N-terminus, the 248-residue chain is Tyrosine recombinase XerD-like (248 aa).

One can recognise a Core-binding (CB) domain in the interval 1 to 72 (MKSYIEPFIA…TANQFLYYLY (72 aa)). The region spanning 85–248 (DTMKVMRTEK…PVTLEKYYKS (164 aa)) is the Tyr recombinase domain. Residues Lys149 and Arg213 contribute to the active site. The O-(3'-phospho-DNA)-tyrosine intermediate role is filled by Tyr245.

Belongs to the 'phage' integrase family. XerD-like subfamily.

It is found in the cytoplasm. Putative tyrosine recombinase. Not involved in the cutting and rejoining of the recombining DNA molecules on dif(SL) site. This is Tyrosine recombinase XerD-like from Streptococcus pyogenes serotype M6 (strain ATCC BAA-946 / MGAS10394).